Here is a 161-residue protein sequence, read N- to C-terminus: 3-hydroxyacyl-[acyl-carrier-protein] dehydratase FabZ (161 aa).

Residue His64 is part of the active site.

Belongs to the thioester dehydratase family. FabZ subfamily.

It localises to the cytoplasm. The catalysed reaction is a (3R)-hydroxyacyl-[ACP] = a (2E)-enoyl-[ACP] + H2O. In terms of biological role, involved in unsaturated fatty acids biosynthesis. Catalyzes the dehydration of short chain beta-hydroxyacyl-ACPs and long chain saturated and unsaturated beta-hydroxyacyl-ACPs. The protein is 3-hydroxyacyl-[acyl-carrier-protein] dehydratase FabZ of Paramagnetospirillum magneticum (strain ATCC 700264 / AMB-1) (Magnetospirillum magneticum).